A 370-amino-acid polypeptide reads, in one-letter code: Alanine racemase (370 aa).

The active-site Proton acceptor; specific for D-alanine is K36. N6-(pyridoxal phosphate)lysine is present on K36. R134 serves as a coordination point for substrate. Residue Y265 is the Proton acceptor; specific for L-alanine of the active site. M313 contacts substrate.

It belongs to the alanine racemase family. Pyridoxal 5'-phosphate serves as cofactor.

The enzyme catalyses L-alanine = D-alanine. It participates in amino-acid biosynthesis; D-alanine biosynthesis; D-alanine from L-alanine: step 1/1. Functionally, catalyzes the interconversion of L-alanine and D-alanine. May also act on other amino acids. This chain is Alanine racemase (alr), found in Desulforamulus reducens (strain ATCC BAA-1160 / DSM 100696 / MI-1) (Desulfotomaculum reducens).